Here is a 191-residue protein sequence, read N- to C-terminus: Dephospho-CoA kinase (191 aa).

A DPCK domain is found at 3–191; that stretch reads AIGITGSYAS…KLIKNLECQV (189 aa). ATP is bound at residue 11–16; that stretch reads ASGKTF.

The protein belongs to the CoaE family.

The protein resides in the cytoplasm. It carries out the reaction 3'-dephospho-CoA + ATP = ADP + CoA + H(+). It participates in cofactor biosynthesis; coenzyme A biosynthesis; CoA from (R)-pantothenate: step 5/5. Catalyzes the phosphorylation of the 3'-hydroxyl group of dephosphocoenzyme A to form coenzyme A. This chain is Dephospho-CoA kinase, found in Rickettsia typhi (strain ATCC VR-144 / Wilmington).